Here is a 317-residue protein sequence, read N- to C-terminus: MKVLYIQSGYGGIYSYFDRWAEECFQNTHTEYMIADKPEAESLMKIEAFQPDFTLMMVGDRVPHDWLTWLKGKDIPVYVWLTEDPFYMDISLQVIKLADAILTIEQNAALYYQELGYQNVYYVPIPVNHRLFKKMGTEHSYHSNLLIIGYPYPNRVQLMKEAVHLPFTVRVIGKEWGKYLPKKVLKQPHIDVVSTWVPPEQAVHYYNGADIVINAHRPYHFAFNQNTMRIKNASFNNRTFDIAACEAFQLTDLPAAHPFSSIISYHGMNDFKEKAAFYINHPEERQKAAAANYKETVPAFTFDELPAKLKAIHLALS.

Functionally, may be involved in maturation of the outermost layer of the spore. May act as a glycosyltransferase that contributes to the glycosylation state of the spore. This Bacillus subtilis (strain 168) protein is Spore protein CgeB.